Consider the following 376-residue polypeptide: UPF0284 protein glr4139 (376 aa).

Belongs to the UPF0284 family.

The polypeptide is UPF0284 protein glr4139 (Gloeobacter violaceus (strain ATCC 29082 / PCC 7421)).